The following is an 879-amino-acid chain: Phosphoinositide 3-kinase regulatory subunit 5 (879 aa).

A heterodimerization region spans residues 23-100; it reads SGSTDISSNW…APYIPETSDL (78 aa). Disordered stretches follow at residues 314-345 and 570-590; these read SLEDDVTEEDEEVDFEEVDDKDEDGGKSPKQD and SSSTNAPMTNAESPLKSPSPS. Over residues 315–336 the composition is skewed to acidic residues; that stretch reads LEDDVTEEDEEVDFEEVDDKDE. Residues 570 to 589 show a composition bias toward polar residues; it reads SSSTNAPMTNAESPLKSPSP. The tract at residues 651 to 751 is interaction with beta-gamma G protein dimers; the sequence is PILADMVLYY…WSNGEKVCTS (101 aa).

Heterodimer. Interacts with a catalytic subunit and with beta-gamma G protein dimers.

The protein resides in the nucleus. Its subcellular location is the cytoplasm. The protein localises to the cell membrane. With respect to regulation, greatly activated by G gamma proteins. Functionally, regulatory subunit of the PI3K gamma complex. Required for recruitment of the catalytic subunit to the plasma membrane via interaction with beta-gamma G protein dimers. Required for G protein-mediated activation of PIK3CG. This Xenopus laevis (African clawed frog) protein is Phosphoinositide 3-kinase regulatory subunit 5 (pik3r5).